A 228-amino-acid polypeptide reads, in one-letter code: Transcription factor zip-11 (228 aa).

A basic motif region spans residues 166–202 (RKRQQNKVAAARYRDKQKAKWQDLLDQLEAEEDRNQR). A bZIP domain is found at 166–224 (RKRQQNKVAAARYRDKQKAKWQDLLDQLEAEEDRNQRLKLQAGHLEKEVAEMRQAFLAK). The segment at 203–210 (LKLQAGHL) is leucine-zipper.

The protein belongs to the bZIP family. In terms of assembly, interacts with CCAAT/enhancer-binding protein cebp-2.

The protein resides in the nucleus. Functionally, transcription factor. Involved in modulating innate immune response pathways, acting to promote resistance against infection by Gram-negative bacterium P.aeruginosa strain PA14. May act as part of a feedback regulatory loop with the pmk-1/p38 MAPK pathway. May also function in concert with CCAAT/enhancer-binding protein cebp-2 to mediate immune responses, independently of the pmk-1/p38 MAPK pathway. In Caenorhabditis elegans, this protein is Transcription factor zip-11.